Here is a 321-residue protein sequence, read N- to C-terminus: MRSANEPDATHVAVLLAETIVALRPALHTGAAVRCVDATGGRGGHSAALLAELGAADTLLILDRDPSAIAALRARFAQDSRVYIRQARFSQLAEVLAALEWERVDAILADLGVSSPQLDEAARGFSFLRDGPLDMRMDPGADRSAAEWLATATEADMTRVLREYGEERFARPIARAILRAREQAPITRTLQLAELIAQVLPRHETGQHPATRSFQGIRIFINRELEELEAFLPQAMNALRAGGRLAVISFHSLEDRLVKRFFRADDYRISADVPLRASELPPLPWHPAGKALRAGPRETRDNPRSRSAVLRVAERSERHAA.

S-adenosyl-L-methionine-binding positions include 43 to 45 (GGH), aspartate 63, phenylalanine 89, aspartate 110, and glutamine 117. The segment at 286–321 (HPAGKALRAGPRETRDNPRSRSAVLRVAERSERHAA) is disordered. Basic and acidic residues-rich tracts occupy residues 295 to 304 (GPRETRDNPR) and 312 to 321 (VAERSERHAA).

This sequence belongs to the methyltransferase superfamily. RsmH family.

It localises to the cytoplasm. It catalyses the reaction cytidine(1402) in 16S rRNA + S-adenosyl-L-methionine = N(4)-methylcytidine(1402) in 16S rRNA + S-adenosyl-L-homocysteine + H(+). Its function is as follows. Specifically methylates the N4 position of cytidine in position 1402 (C1402) of 16S rRNA. This Acidithiobacillus ferrooxidans (strain ATCC 23270 / DSM 14882 / CIP 104768 / NCIMB 8455) (Ferrobacillus ferrooxidans (strain ATCC 23270)) protein is Ribosomal RNA small subunit methyltransferase H.